Reading from the N-terminus, the 425-residue chain is CAAX prenyl protease 1 homolog (425 aa).

5 helical membrane-spanning segments follow: residues 3-23 (LPYL…ETYL), 62-80 (FHFI…ILYY), 109-129 (LAFL…FSLY), 155-175 (GILL…IIVQ), and 188-208 (FMFA…APLF). Zn(2+) is bound at residue His-284. Residue Glu-285 is part of the active site. A Zn(2+)-binding site is contributed by His-288. 2 consecutive transmembrane segments (helical) span residues 295 to 315 (VYSF…YTLV) and 332 to 352 (VIIG…LLSF). Residue Glu-362 participates in Zn(2+) binding. The active-site Proton donor is Asp-366.

Belongs to the peptidase M48A family. Zn(2+) is required as a cofactor.

The protein resides in the endoplasmic reticulum membrane. It catalyses the reaction Hydrolyzes the peptide bond -P2-(S-farnesyl or geranylgeranyl)C-P1'-P2'-P3'-COOH where P1' and P2' are amino acids with aliphatic side chains and P3' is any C-terminal residue.. Proteolytically removes the C-terminal three residues of farnesylated proteins. This Oryza sativa subsp. japonica (Rice) protein is CAAX prenyl protease 1 homolog (FACE1).